The chain runs to 164 residues: MPVLDIAEFAAAIPDYLPIVGLDPGEKTIGVAVSDVTLTVASPLALIKKTKFSEDAATLFQLMGSRKAAGIVIGLPMNMDGTEGVRCQSNRALGRNLLRLQPHIPITFWDERLSTAAVTRVLIEEHDVNRKRRAEVVDKMAAAWILQGALERMRGIAEAAGKGF.

This sequence belongs to the YqgF nuclease family.

Its subcellular location is the cytoplasm. Its function is as follows. Could be a nuclease involved in processing of the 5'-end of pre-16S rRNA. The protein is Putative pre-16S rRNA nuclease of Caulobacter sp. (strain K31).